We begin with the raw amino-acid sequence, 314 residues long: Periplasmic [NiFe] hydrogenase small subunit (314 aa).

Positions 1 to 49 (MNFSVGLGRDDAEKRLVQNGVSRRDFMKFCATVAAAMGMGPAFAPKVAE) form a signal peptide, tat-type signal. [4Fe-4S] cluster-binding residues include cysteine 67, cysteine 70, cysteine 164, cysteine 197, histidine 234, cysteine 237, cysteine 262, and cysteine 268. [3Fe-4S] cluster-binding residues include cysteine 277, cysteine 295, and cysteine 298.

Belongs to the [NiFe]/[NiFeSe] hydrogenase small subunit family. As to quaternary structure, heterodimer of a large and a small subunit. The cofactor is [4Fe-4S] cluster. It depends on [3Fe-4S] cluster as a cofactor. Predicted to be exported by the Tat system. The position of the signal peptide cleavage has been experimentally proven.

It localises to the periplasm. It carries out the reaction 2 Fe(III)-[cytochrome c3] + H2 = 2 Fe(II)-[cytochrome c3] + 2 H(+). Functionally, involved in hydrogen uptake for the anaerobic reduction of sulfate to hydrogen sulfide in an electron transport chain. Cytochrome c3 is the physiological electron acceptor. This Solidesulfovibrio fructosivorans (Desulfovibrio fructosivorans) protein is Periplasmic [NiFe] hydrogenase small subunit (hydA).